A 285-amino-acid polypeptide reads, in one-letter code: Cytosolic Fe-S cluster assembly factor CFD1 (285 aa).

30-37 contributes to the ATP binding site; sequence GKGGVGKS. [4Fe-4S] cluster-binding residues include cysteine 206 and cysteine 209.

Belongs to the Mrp/NBP35 ATP-binding proteins family. NUBP2/CFD1 subfamily. In terms of assembly, heterotetramer of 2 NBP35 and 2 CFD1 chains. Requires [4Fe-4S] cluster as cofactor.

The protein localises to the cytoplasm. In terms of biological role, component of the cytosolic iron-sulfur (Fe/S) protein assembly (CIA) machinery. Required for maturation of extramitochondrial Fe-S proteins. The NBP35-CFD1 heterotetramer forms a Fe-S scaffold complex, mediating the de novo assembly of an Fe-S cluster and its transfer to target apoproteins. Required for biogenesis and export of both ribosomal subunits, which may reflect a role in assembly of the Fe/S clusters in RLI1, a protein which performs rRNA processing and ribosome export. This is Cytosolic Fe-S cluster assembly factor CFD1 from Candida glabrata (strain ATCC 2001 / BCRC 20586 / JCM 3761 / NBRC 0622 / NRRL Y-65 / CBS 138) (Yeast).